Consider the following 664-residue polypeptide: Probable L-type lectin-domain containing receptor kinase V.3 (664 aa).

A signal peptide spans 1–26 (MSMSCKINWLMVLVIIALSNLESSLG). Topologically, residues 27–278 (RLVFEGSAGL…YPKAESQVKL (252 aa)) are extracellular. The segment at 28–250 (LVFEGSAGLM…AIHYMWMWYV (223 aa)) is legume-lectin like. Residues Asn-69, Asn-116, Asn-122, Asn-174, and Asn-197 are each glycosylated (N-linked (GlcNAc...) asparagine). A helical membrane pass occupies residues 279–299 (IVLVTFLTLALFVALAASALI). Over 300 to 664 (VFFYKRHKKL…LPSGRPRLFL (365 aa)) the chain is Cytoplasmic. The Protein kinase domain maps to 335–617 (NGFKQLLGEG…GVSELPDNLL (283 aa)). Residues 341 to 349 (LGEGGFGPV) and Lys-364 contribute to the ATP site. The active-site Proton acceptor is Asp-461.

It in the C-terminal section; belongs to the protein kinase superfamily. Ser/Thr protein kinase family. In the N-terminal section; belongs to the leguminous lectin family.

The protein localises to the cell membrane. It catalyses the reaction L-seryl-[protein] + ATP = O-phospho-L-seryl-[protein] + ADP + H(+). The enzyme catalyses L-threonyl-[protein] + ATP = O-phospho-L-threonyl-[protein] + ADP + H(+). This Arabidopsis thaliana (Mouse-ear cress) protein is Probable L-type lectin-domain containing receptor kinase V.3 (LECRK53).